Consider the following 334-residue polypeptide: Glucokinase-like protein PD_0680 (334 aa).

18–23 (ADVGGT) provides a ligand contact to ATP.

The protein belongs to the bacterial glucokinase family.

This chain is Glucokinase-like protein PD_0680, found in Xylella fastidiosa (strain Temecula1 / ATCC 700964).